The primary structure comprises 255 residues: Indole-3-glycerol phosphate synthase (255 aa).

It belongs to the TrpC family.

The catalysed reaction is 1-(2-carboxyphenylamino)-1-deoxy-D-ribulose 5-phosphate + H(+) = (1S,2R)-1-C-(indol-3-yl)glycerol 3-phosphate + CO2 + H2O. It participates in amino-acid biosynthesis; L-tryptophan biosynthesis; L-tryptophan from chorismate: step 4/5. The polypeptide is Indole-3-glycerol phosphate synthase (Streptococcus mutans serotype c (strain ATCC 700610 / UA159)).